The following is a 99-amino-acid chain: Malonate decarboxylase acyl carrier protein (99 aa).

The residue at position 25 (Ser25) is an O-(phosphoribosyl dephospho-coenzyme A)serine.

It belongs to the MdcC family. Covalently binds the prosthetic group of malonate decarboxylase.

It is found in the cytoplasm. In terms of biological role, subunit of malonate decarboxylase, it is an acyl carrier protein to which acetyl and malonyl thioester residues are bound via a 2'-(5''-phosphoribosyl)-3'-dephospho-CoA prosthetic group and turn over during the catalytic mechanism. This is Malonate decarboxylase acyl carrier protein from Pseudomonas fluorescens (strain Pf0-1).